The chain runs to 189 residues: Phomopsin biosynthesis cluster protein D (189 aa).

It belongs to the oryJ family.

Its function is as follows. Part of the gene cluster that mediates the biosynthesis of the phomopsins, a group of hexapeptide mycotoxins which infects lupins and causes lupinosis disease in livestock. The role of phomC within the phomopsins biosynthesis pathway has still to be determined. The pathway starts with the processing of the precursor phomA by several endopeptidases including kexin proteases as well as the cluster-specific S41 family peptidase phomP1 and the oligopeptidase phomG to produce 10 identical copies of the hexapeptide Tyr-Val-Ile-Pro-Ile-Asp. After being excised from the precursor peptide, the core peptides are cyclized and modified post-translationally by enzymes encoded within the gene cluster. The timing and order of proteolysis of the phomA precursor and PTMs are still unknown. Two tyrosinase-like enzymes, phomQ1 and phomQ2, catalyze the chlorination and hydroxylation of Tyr, respectively. PhomYb, is proposed to be involved in the construction of the macrocyclic structure. The other 4 ustYa family proteins may be involved in PTMs that generate the unique structure of phomopsin A. PhomYa is required for the hydroxylation of C-beta of Tyr. PhomYc, phomYd, and phomYe are responsible for the biosynthesis of 2,3-dehydroisoleucine (dIle), 2,3-dehydroaspartic acid (dAsp), and 3,4-dehydroproline (dPro), respectively. While dIle formation by phomYc is indispensable for the installation of dAsp by phomYd, the order of the other PTMs have not been elucidated yet. Most of the biosynthetic enzymes likely have broad substrate specificity, and thus, there might be a metabolic grid from a precursor to phomopsin A. The enzyme(s) responsible for the biosynthesis of 3,4-dehydrovaline (dVal) have also not been identified yet. Finally, phomM acts as an S-adenosylmethionine-dependent alpha-N-methyltransferase that catalyzes two successive N-methylation reactions, converting N-desmethyl-phomopsin A to phomopsin A and phomopsin A further to an N,N-dimethylated congener called phomopsin E. The chain is Phomopsin biosynthesis cluster protein D from Diaporthe leptostromiformis (Lupinosis disease fungus).